Here is a 268-residue protein sequence, read N- to C-terminus: Interleukin-1 alpha (268 aa).

A propeptide spanning residues 1–112 is cleaved from the precursor; it reads MAKVPDLFED…NTEEEIIKPR (112 aa). Lys82 bears the N6-acetyllysine mark. The interval 82-86 is nuclear localization signal (NLS); it reads KKRRL. Phosphoserine is present on Ser87. N-linked (GlcNAc...) asparagine glycans are attached at residues Asn102 and Asn141.

Belongs to the IL-1 family. Monomer. Interacts with TMED10; the interaction mediates the translocation from the cytoplasm into the ERGIC (endoplasmic reticulum-Golgi intermediate compartment) and thereby secretion. Interacts with IL1R1. Interacts with S100A13; this interaction is the first step in the export of IL1A, followed by direct translocation of this complex across the plasma membrane. Acetylated within its nuclear localization sequence, which impacts subcellular localization. Post-translationally, proteolytic processed by CAPN1 in a calcium-dependent manner. Cleavage from 31 kDa precursor to 18 kDa biologically active molecules. In terms of processing, phosphorylated. Phosphorylation greatly enhances susceptibility to digestion and promotes the conversion of pre-IL1A alpha to the biologically active IL1A.

Its subcellular location is the nucleus. The protein localises to the cytoplasm. It is found in the secreted. Cytokine constitutively present intracellularly in nearly all resting non-hematopoietic cells that plays an important role in inflammation and bridges the innate and adaptive immune systems. After binding to its receptor IL1R1 together with its accessory protein IL1RAP, forms the high affinity interleukin-1 receptor complex. Signaling involves the recruitment of adapter molecules such as MYD88, IRAK1 or IRAK4. In turn, mediates the activation of NF-kappa-B and the three MAPK pathways p38, p42/p44 and JNK pathways. Within the cell, acts as an alarmin and cell death results in its liberation in the extracellular space after disruption of the cell membrane to induce inflammation and alert the host to injury or damage. In addition to its role as a danger signal, which occurs when the cytokine is passively released by cell necrosis, directly senses DNA damage and acts as signal for genotoxic stress without loss of cell integrity. This chain is Interleukin-1 alpha (IL1A), found in Bos taurus (Bovine).